A 381-amino-acid polypeptide reads, in one-letter code: Cytochrome b (381 aa).

The next 4 helical transmembrane spans lie at 36–56 (FGSL…FLTM), 80–101 (WLIR…YIHI), 116–136 (WMVG…GYVL), and 181–201 (FYTF…IHLL). Heme b-binding residues include histidine 86 and histidine 100. 2 residues coordinate heme b: histidine 185 and histidine 199. Histidine 204 lines the a ubiquinone pocket. 4 consecutive transmembrane segments (helical) span residues 229–249 (FKDM…TLTN), 291–311 (LGGV…PLTF), 323–343 (MNQI…WIGA), and 350–370 (YVFV…INPM).

It belongs to the cytochrome b family. The main subunits of complex b-c1 are: cytochrome b, cytochrome c1 and the Rieske protein. Heme b serves as cofactor.

It localises to the mitochondrion inner membrane. Functionally, component of the ubiquinol-cytochrome c reductase complex (complex III or cytochrome b-c1 complex) that is part of the mitochondrial respiratory chain. The b-c1 complex mediates electron transfer from ubiquinol to cytochrome c. Contributes to the generation of a proton gradient across the mitochondrial membrane that is then used for ATP synthesis. The polypeptide is Cytochrome b (MT-CYB) (Ostrinia nubilalis (European corn borer)).